A 286-amino-acid polypeptide reads, in one-letter code: ATP synthase gamma chain (286 aa).

Belongs to the ATPase gamma chain family. In terms of assembly, F-type ATPases have 2 components, CF(1) - the catalytic core - and CF(0) - the membrane proton channel. CF(1) has five subunits: alpha(3), beta(3), gamma(1), delta(1), epsilon(1). CF(0) has three main subunits: a, b and c.

It localises to the cell inner membrane. In terms of biological role, produces ATP from ADP in the presence of a proton gradient across the membrane. The gamma chain is believed to be important in regulating ATPase activity and the flow of protons through the CF(0) complex. The protein is ATP synthase gamma chain of Shewanella pealeana (strain ATCC 700345 / ANG-SQ1).